Consider the following 126-residue polypeptide: Glycine cleavage system H protein (126 aa).

A Lipoyl-binding domain is found at 22–104 (TVTIGITEYA…YEKAWMVKVE (83 aa)). Position 63 is an N6-lipoyllysine (Lys-63).

The protein belongs to the GcvH family. In terms of assembly, the glycine cleavage system is composed of four proteins: P, T, L and H. (R)-lipoate is required as a cofactor.

Its function is as follows. The glycine cleavage system catalyzes the degradation of glycine. The H protein shuttles the methylamine group of glycine from the P protein to the T protein. In terms of biological role, is also involved in protein lipoylation via its role as an octanoyl/lipoyl carrier protein intermediate. The polypeptide is Glycine cleavage system H protein (Staphylococcus haemolyticus (strain JCSC1435)).